Here is a 204-residue protein sequence, read N- to C-terminus: Leucyl/phenylalanyl-tRNA--protein transferase (204 aa).

The protein belongs to the L/F-transferase family.

Its subcellular location is the cytoplasm. The catalysed reaction is N-terminal L-lysyl-[protein] + L-leucyl-tRNA(Leu) = N-terminal L-leucyl-L-lysyl-[protein] + tRNA(Leu) + H(+). The enzyme catalyses N-terminal L-arginyl-[protein] + L-leucyl-tRNA(Leu) = N-terminal L-leucyl-L-arginyl-[protein] + tRNA(Leu) + H(+). It catalyses the reaction L-phenylalanyl-tRNA(Phe) + an N-terminal L-alpha-aminoacyl-[protein] = an N-terminal L-phenylalanyl-L-alpha-aminoacyl-[protein] + tRNA(Phe). Functionally, functions in the N-end rule pathway of protein degradation where it conjugates Leu, Phe and, less efficiently, Met from aminoacyl-tRNAs to the N-termini of proteins containing an N-terminal arginine or lysine. The sequence is that of Leucyl/phenylalanyl-tRNA--protein transferase from Brucella melitensis biotype 2 (strain ATCC 23457).